The primary structure comprises 244 residues: Small ribosomal subunit protein eS4 (244 aa).

An S4 RNA-binding domain is found at 43–106 (LPLLLIVRDT…NENYLVLFDE (64 aa)).

It belongs to the eukaryotic ribosomal protein eS4 family.

The sequence is that of Small ribosomal subunit protein eS4 (rps4e) from Methanococcus vannielii.